We begin with the raw amino-acid sequence, 673 residues long: NADH-quinone oxidoreductase chain 3 (673 aa).

The 2Fe-2S ferredoxin-type domain maps to 5–90 (RKIKIDDTII…PSEIRTNSPM (86 aa)). Residues Cys37, Cys48, Cys51, and Cys66 each contribute to the [2Fe-2S] cluster site. The 40-residue stretch at 90–129 (MVKKAREGVMEFLLINHPLDCPICDQGGECDLQDQAMAYG) folds into the 4Fe-4S His(Cys)3-ligated-type domain. [4Fe-4S] cluster is bound by residues His106, Cys110, Cys113, Cys119, Cys158, Cys161, Cys164, and Cys208. The 57-residue stretch at 227–283 (LTKTESIDVMDALGSSIRIDTKGREVMRILPRNHDGVNEEWISDKTRFVWDGLRRQR) folds into the 4Fe-4S Mo/W bis-MGD-type domain.

It belongs to the complex I 75 kDa subunit family. In terms of assembly, NDH-1 is composed of at least 14 different subunits, Nqo1 to Nqo14. The complex has a L-shaped structure, with the hydrophobic arm (subunits Nqo7, Nqo8, Nqo10 to Nqo14) embedded in the inner membrane and the hydrophilic peripheral arm (subunits Nqo1 to Nqo6, Nqo9) protruding into the bacterial cytoplasm. The hydrophilic domain contains all the redox centers. [2Fe-2S] cluster is required as a cofactor. Requires [4Fe-4S] cluster as cofactor.

Its subcellular location is the cell inner membrane. It carries out the reaction a quinone + NADH + 5 H(+)(in) = a quinol + NAD(+) + 4 H(+)(out). NDH-1 shuttles electrons from NADH, via FMN and iron-sulfur (Fe-S) centers, to quinones in the respiratory chain. The immediate electron acceptor for the enzyme in this species is believed to be ubiquinone. Couples the redox reaction to proton translocation (for every two electrons transferred, four hydrogen ions are translocated across the cytoplasmic membrane), and thus conserves the redox energy in a proton gradient. This chain is NADH-quinone oxidoreductase chain 3, found in Paracoccus denitrificans.